The sequence spans 124 residues: Small ribosomal subunit protein uS12 (124 aa).

At Asp89 the chain carries 3-methylthioaspartic acid.

Belongs to the universal ribosomal protein uS12 family. Part of the 30S ribosomal subunit. Contacts proteins S8 and S17. May interact with IF1 in the 30S initiation complex.

Its function is as follows. With S4 and S5 plays an important role in translational accuracy. Interacts with and stabilizes bases of the 16S rRNA that are involved in tRNA selection in the A site and with the mRNA backbone. Located at the interface of the 30S and 50S subunits, it traverses the body of the 30S subunit contacting proteins on the other side and probably holding the rRNA structure together. The combined cluster of proteins S8, S12 and S17 appears to hold together the shoulder and platform of the 30S subunit. The polypeptide is Small ribosomal subunit protein uS12 (Blochmanniella floridana).